Reading from the N-terminus, the 384-residue chain is 5-amino-6-(D-ribitylamino)uracil--L-tyrosine 4-hydroxyphenyl transferase 2 (384 aa).

One can recognise a Radical SAM core domain in the interval 53–286 (VSYVVNRNIY…IAISRIILHT (234 aa)). [4Fe-4S] cluster is bound by residues C67, C71, and C74.

Belongs to the radical SAM superfamily. CofH family. In terms of assembly, consists of two subunits, CofG and CofH. [4Fe-4S] cluster serves as cofactor.

The catalysed reaction is 5-amino-6-(D-ribitylamino)uracil + L-tyrosine + S-adenosyl-L-methionine = 5-amino-5-(4-hydroxybenzyl)-6-(D-ribitylimino)-5,6-dihydrouracil + 2-iminoacetate + 5'-deoxyadenosine + L-methionine + H(+). The protein operates within cofactor biosynthesis; coenzyme F0 biosynthesis. Functionally, catalyzes the radical-mediated synthesis of 5-amino-5-(4-hydroxybenzyl)-6-(D-ribitylimino)-5,6-dihydrouracil from 5-amino-6-(D-ribitylamino)uracil and L-tyrosine. This chain is 5-amino-6-(D-ribitylamino)uracil--L-tyrosine 4-hydroxyphenyl transferase 2, found in Methanosarcina acetivorans (strain ATCC 35395 / DSM 2834 / JCM 12185 / C2A).